We begin with the raw amino-acid sequence, 275 residues long: Probable CCR4-associated factor 1 homolog 7 (275 aa).

Residues Asp40, Glu42, Asp167, and Asp236 each contribute to the a divalent metal cation site.

The protein belongs to the CAF1 family. As to quaternary structure, component of the CCR4-NOT complex, at least composed of CRR4 and CAF1 proteins. A divalent metal cation serves as cofactor.

Its subcellular location is the nucleus. It localises to the cytoplasm. It carries out the reaction Exonucleolytic cleavage of poly(A) to 5'-AMP.. In terms of biological role, ubiquitous transcription factor required for a diverse set of processes. It is a component of the CCR4 complex involved in the control of gene expression. This chain is Probable CCR4-associated factor 1 homolog 7 (CAF1-7), found in Arabidopsis thaliana (Mouse-ear cress).